Reading from the N-terminus, the 592-residue chain is Protein US23 (592 aa).

The tract at residues 407 to 491 (PRSLGDGEEE…NNVVPNVDRR (85 aa)) is disordered. The segment covering 460-481 (ADDEEQGEDDDDSGAEPMEPEE) has biased composition (acidic residues).

Belongs to the herpesviridae US22 family.

It localises to the virion tegument. This is Protein US23 (US23) from Homo sapiens (Human).